Consider the following 379-residue polypeptide: Cytochrome b (379 aa).

4 helical membrane-spanning segments follow: residues 33 to 53, 77 to 98, 113 to 133, and 178 to 198; these read FGSL…FLAM, WTIR…FIHV, WNVG…GYVL, and FFAL…IHLL. The heme b site is built by His83 and His97. Positions 182 and 196 each coordinate heme b. His201 contributes to the a ubiquinone binding site. The next 4 membrane-spanning stretches (helical) occupy residues 226–246, 288–308, 320–340, and 347–367; these read TKDF…ALFY, LGGV…PFLQ, LSQF…WIGG, and FINI…FIMP.

The protein belongs to the cytochrome b family. The cytochrome bc1 complex contains 11 subunits: 3 respiratory subunits (MT-CYB, CYC1 and UQCRFS1), 2 core proteins (UQCRC1 and UQCRC2) and 6 low-molecular weight proteins (UQCRH/QCR6, UQCRB/QCR7, UQCRQ/QCR8, UQCR10/QCR9, UQCR11/QCR10 and a cleavage product of UQCRFS1). This cytochrome bc1 complex then forms a dimer. The cofactor is heme b.

It localises to the mitochondrion inner membrane. Component of the ubiquinol-cytochrome c reductase complex (complex III or cytochrome b-c1 complex) that is part of the mitochondrial respiratory chain. The b-c1 complex mediates electron transfer from ubiquinol to cytochrome c. Contributes to the generation of a proton gradient across the mitochondrial membrane that is then used for ATP synthesis. The chain is Cytochrome b (MT-CYB) from Lepilemur ankaranensis (Ankarana sportive lemur).